Here is a 629-residue protein sequence, read N- to C-terminus: Hemocyanin F chain (629 aa).

Cu cation is bound by residues His-172, His-176, His-203, His-324, His-328, and His-364. N-linked (GlcNAc...) asparagine glycans are attached at residues Asn-395 and Asn-447. Residues 503–513 show a composition bias toward polar residues; that stretch reads SESSVTVSHTP. The segment at 503 to 522 is disordered; that stretch reads SESSVTVSHTPTFEELQRGE. Asn-527 carries N-linked (GlcNAc...) asparagine glycosylation. Cys-534 and Cys-582 are oxidised to a cystine. Asn-615 is a glycosylation site (N-linked (GlcNAc...) asparagine).

The protein belongs to the tyrosinase family. Hemocyanin subfamily. In terms of assembly, tarantula hemocyanin is a 24-chain polymer with seven different chains identified. As to expression, hemolymph.

Its subcellular location is the secreted. The protein localises to the extracellular space. Its function is as follows. Hemocyanins are copper-containing oxygen carriers occurring freely dissolved in the hemolymph of many mollusks and arthropods. The protein is Hemocyanin F chain (HCF) of Aphonopelma sp. (American tarantula).